We begin with the raw amino-acid sequence, 1122 residues long: Adhesin P1 (1122 aa).

A signal peptide spans 1 to 30 (MKKLIFKLSVGITPLALIGLGSFGLAVSGA). Disordered regions lie at residues 183–209 (AGDT…GGAV), 244–273 (DYNS…GGRT), and 544–563 (QNSG…NGNE). Over residues 195 to 208 (AGGGSGSSAAGGGA) the composition is skewed to gly residues. The span at 259-273 (LDSSESSESINGGRT) shows a compositional bias: polar residues. The helical transmembrane segment at 997 to 1021 (VLPVAISIPIIIIALALALGLGIGI) threads the bilayer. The tract at residues 1066-1122 (KTPQMLQANKKDGASSPSKPSAPAAKKPTGPTKPSAPGAKPTAPAKPKAPAPTKKIE) is disordered. Residues 1079–1122 (ASSPSKPSAPAAKKPTGPTKPSAPGAKPTAPAKPKAPAPTKKIE) show a composition bias toward low complexity.

Belongs to the adhesin P1 family.

It is found in the cell membrane. Functionally, could be involved in cytadherence. This chain is Adhesin P1 (gapA), found in Mycoplasmoides gallisepticum (Mycoplasma gallisepticum).